The sequence spans 334 residues: 5-formaminoimidazole-4-carboxamide-1-(beta)-D-ribofuranosyl 5'-monophosphate synthetase (334 aa).

5-amino-1-(5-phospho-beta-D-ribosyl)imidazole-4-carboxamide contacts are provided by Ser-10, His-11, Ser-71, and His-75. In terms of domain architecture, ATP-grasp spans 78–325 (IELVENMKVP…IAMEIREAIE (248 aa)). ATP is bound by residues 132–142 (KPHGAKGGKGY), 173–176 (QEYV), and Glu-204. Asn-232 is a 5-amino-1-(5-phospho-beta-D-ribosyl)imidazole-4-carboxamide binding site. Mg(2+)-binding residues include Glu-270 and Glu-283.

The protein belongs to the phosphohexose mutase family. As to quaternary structure, homotrimer and homohexamer. Requires Mg(2+) as cofactor. It depends on Mn(2+) as a cofactor.

The enzyme catalyses 5-amino-1-(5-phospho-beta-D-ribosyl)imidazole-4-carboxamide + formate + ATP = 5-formamido-1-(5-phospho-D-ribosyl)imidazole-4-carboxamide + ADP + phosphate. Its pathway is purine metabolism; IMP biosynthesis via de novo pathway; 5-formamido-1-(5-phospho-D-ribosyl)imidazole-4-carboxamide from 5-amino-1-(5-phospho-D-ribosyl)imidazole-4-carboxamide (formate route): step 1/1. Catalyzes the ATP- and formate-dependent formylation of 5-aminoimidazole-4-carboxamide-1-beta-d-ribofuranosyl 5'-monophosphate (AICAR) to 5-formaminoimidazole-4-carboxamide-1-beta-d-ribofuranosyl 5'-monophosphate (FAICAR) in the absence of folates. In Pyrococcus furiosus (strain ATCC 43587 / DSM 3638 / JCM 8422 / Vc1), this protein is 5-formaminoimidazole-4-carboxamide-1-(beta)-D-ribofuranosyl 5'-monophosphate synthetase.